Consider the following 41-residue polypeptide: Histone H3.2 (41 aa).

A disordered region spans residues 1-41; it reads MARTKQTARKSTGAKAPRKQLASKAARKSAPATGGIKKPHR.

It belongs to the histone H3 family. As to quaternary structure, the nucleosome is a histone octamer containing two molecules each of H2A, H2B, H3 and H4 assembled in one H3-H4 heterotetramer and two H2A-H2B heterodimers. The octamer wraps approximately 147 bp of DNA.

Its subcellular location is the nucleus. The protein resides in the chromosome. Its function is as follows. Core component of nucleosome. Nucleosomes wrap and compact DNA into chromatin, limiting DNA accessibility to the cellular machineries which require DNA as a template. Histones thereby play a central role in transcription regulation, DNA repair, DNA replication and chromosomal stability. DNA accessibility is regulated via a complex set of post-translational modifications of histones, also called histone code, and nucleosome remodeling. This chain is Histone H3.2, found in Tetrahymena australis.